Reading from the N-terminus, the 35-residue chain is Basic endochitinase CH1 (35 aa).

It belongs to the glycosyl hydrolase 19 family. Chitinase class I subfamily.

The enzyme catalyses Random endo-hydrolysis of N-acetyl-beta-D-glucosaminide (1-&gt;4)-beta-linkages in chitin and chitodextrins.. In terms of biological role, defense against chitin-containing fungal pathogens. The polypeptide is Basic endochitinase CH1 (Castanea sativa (Sweet chestnut)).